Here is a 568-residue protein sequence, read N- to C-terminus: Cytosolic purine 5'-nucleotidase (568 aa).

Aspartate 52 acts as the Nucleophile in catalysis. IMP contacts are provided by aspartate 52 and aspartate 54. Mg(2+) contacts are provided by aspartate 52 and aspartate 54. Residue aspartate 54 is the Proton donor of the active site. Positions 144 and 154 each coordinate ATP. Residues arginine 202, aspartate 206, lysine 215, threonine 249, asparagine 250, serine 251, and lysine 292 each coordinate IMP. Aspartate 351 lines the Mg(2+) pocket. Glutamine 453 and arginine 456 together coordinate ATP. The tract at residues 528-568 is disordered; that stretch reads ISEIKPPNLFPQKPQEITHCHDEDDDEEEEEEEEEEEEEEE. The tract at residues 548–568 is required for tetramer assembly; sequence HDEDDDEEEEEEEEEEEEEEE. A compositionally biased stretch (acidic residues) spans 550-568; sequence EDDDEEEEEEEEEEEEEEE.

It belongs to the 5'(3')-deoxyribonucleotidase family. As to quaternary structure, homotetramer. Mg(2+) is required as a cofactor.

It is found in the cytoplasm. The protein localises to the cytosol. The enzyme catalyses a ribonucleoside 5'-phosphate + H2O = a ribonucleoside + phosphate. It carries out the reaction a 2'-deoxyribonucleoside + a ribonucleoside 5'-phosphate = a ribonucleoside + a 2'-deoxyribonucleoside 5'-phosphate. It catalyses the reaction IMP + H2O = inosine + phosphate. The catalysed reaction is GMP + H2O = guanosine + phosphate. The enzyme catalyses dIMP + H2O = 2'-deoxyinosine + phosphate. It carries out the reaction dGMP + H2O = 2'-deoxyguanosine + phosphate. It catalyses the reaction XMP + H2O = xanthosine + phosphate. The catalysed reaction is inosine + GMP = guanosine + IMP. The enzyme catalyses dGMP + inosine = 2'-deoxyguanosine + IMP. It carries out the reaction dIMP + inosine = 2'-deoxyinosine + IMP. It catalyses the reaction inosine + UMP = uridine + IMP. The catalysed reaction is inosine + CMP = cytidine + IMP. The enzyme catalyses inosine + AMP = IMP + adenosine. Its activity is regulated as follows. Allosterically activated by various compounds including ATP, 2,3-BPG/2,3-Bisphosphoglyceric acid and Ap4A/P1,P4-bis(5'-adenosyl) tetraphosphate. Binding of an allosteric activator is a prerequisiste to magnesium and substrate binding. Inhibited by inorganic phosphate. Functionally, broad specificity cytosolic 5'-nucleotidase that catalyzes the dephosphorylation of 6-hydroxypurine nucleoside 5'-monophosphates. In addition, possesses a phosphotransferase activity by which it can transfer a phosphate from a donor nucleoside monophosphate to an acceptor nucleoside, preferably inosine, deoxyinosine and guanosine. Has the highest activities for IMP and GMP followed by dIMP, dGMP and XMP. Could also catalyze the transfer of phosphates from pyrimidine monophosphates but with lower efficiency. Through these activities regulates the purine nucleoside/nucleotide pools within the cell. This is Cytosolic purine 5'-nucleotidase (nt5c2) from Xenopus tropicalis (Western clawed frog).